The primary structure comprises 285 residues: Diaminopimelate epimerase 2 (285 aa).

Substrate is bound by residues N11, N63, 73–74, N158, N191, 209–210, and 219–220; these read GN, ER, and GS.

It belongs to the diaminopimelate epimerase family. In terms of assembly, homodimer.

The protein localises to the cytoplasm. The catalysed reaction is (2S,6S)-2,6-diaminopimelate = meso-2,6-diaminopimelate. It participates in amino-acid biosynthesis; L-lysine biosynthesis via DAP pathway; DL-2,6-diaminopimelate from LL-2,6-diaminopimelate: step 1/1. In terms of biological role, catalyzes the stereoinversion of LL-2,6-diaminopimelate (L,L-DAP) to meso-diaminopimelate (meso-DAP), a precursor of L-lysine and an essential component of the bacterial peptidoglycan. The chain is Diaminopimelate epimerase 2 from Nostoc sp. (strain PCC 7120 / SAG 25.82 / UTEX 2576).